We begin with the raw amino-acid sequence, 355 residues long: 3-isopropylmalate dehydrogenase (355 aa).

Residues R98, R108, R132, and D223 each contribute to the substrate site. D223, D247, and D251 together coordinate Mg(2+). 283–295 contributes to the NAD(+) binding site; the sequence is GSAPDIAGQQKAD.

This sequence belongs to the isocitrate and isopropylmalate dehydrogenases family. LeuB type 2 subfamily. Homodimer. Requires Mg(2+) as cofactor. It depends on Mn(2+) as a cofactor.

Its subcellular location is the cytoplasm. The enzyme catalyses (2R,3S)-3-isopropylmalate + NAD(+) = 4-methyl-2-oxopentanoate + CO2 + NADH. It functions in the pathway amino-acid biosynthesis; L-leucine biosynthesis; L-leucine from 3-methyl-2-oxobutanoate: step 3/4. Functionally, catalyzes the oxidation of 3-carboxy-2-hydroxy-4-methylpentanoate (3-isopropylmalate) to 3-carboxy-4-methyl-2-oxopentanoate. The product decarboxylates to 4-methyl-2 oxopentanoate. The sequence is that of 3-isopropylmalate dehydrogenase from Clavibacter michiganensis subsp. michiganensis (strain NCPPB 382).